Reading from the N-terminus, the 252-residue chain is 14-3-3 protein homolog 1 (252 aa).

The protein belongs to the 14-3-3 family.

This chain is 14-3-3 protein homolog 1, found in Schistosoma mansoni (Blood fluke).